We begin with the raw amino-acid sequence, 287 residues long: ATP synthase gamma chain (287 aa).

It belongs to the ATPase gamma chain family. In terms of assembly, F-type ATPases have 2 components, CF(1) - the catalytic core - and CF(0) - the membrane proton channel. CF(1) has five subunits: alpha(3), beta(3), gamma(1), delta(1), epsilon(1). CF(0) has three main subunits: a, b and c.

The protein resides in the cell inner membrane. Produces ATP from ADP in the presence of a proton gradient across the membrane. The gamma chain is believed to be important in regulating ATPase activity and the flow of protons through the CF(0) complex. The chain is ATP synthase gamma chain from Xanthomonas oryzae pv. oryzae (strain MAFF 311018).